A 95-amino-acid polypeptide reads, in one-letter code: Co-chaperonin GroES (95 aa).

It belongs to the GroES chaperonin family. As to quaternary structure, heptamer of 7 subunits arranged in a ring. Interacts with the chaperonin GroEL.

The protein localises to the cytoplasm. Functionally, together with the chaperonin GroEL, plays an essential role in assisting protein folding. The GroEL-GroES system forms a nano-cage that allows encapsulation of the non-native substrate proteins and provides a physical environment optimized to promote and accelerate protein folding. GroES binds to the apical surface of the GroEL ring, thereby capping the opening of the GroEL channel. The polypeptide is Co-chaperonin GroES (Rickettsia akari (strain Hartford)).